Consider the following 811-residue polypeptide: G-type lectin S-receptor-like serine/threonine-protein kinase LECRK3 (811 aa).

Positions 1 to 23 are cleaved as a signal peptide; the sequence is MAHLLFLPILQLLLLYCTKSAQA. The 130-residue stretch at 24-153 folds into the Bulb-type lectin domain; sequence QLNISIGSSL…DGATKWESFG (130 aa). Residues 24-464 are Extracellular-facing; that stretch reads QLNISIGSSL…DKKYWILGSS (441 aa). N26, N39, N59, N219, N226, N237, and N242 each carry an N-linked (GlcNAc...) asparagine glycan. The EGF-like; atypical domain maps to 292 to 344; the sequence is PENICQSIQTMVGSGACGFNSYCTIDGTKNTTSCLCPQNYKFIDDKRKYKGCR. Cystine bridges form between C296–C314, C308–C325, C327–C343, C389–C411, and C393–C399. N321 is a glycosylation site (N-linked (GlcNAc...) asparagine). The region spanning 352 to 430 is the PAN domain; the sequence is CDLDETTAML…GKMDVNVPRT (79 aa). Residues 465-485 form a helical membrane-spanning segment; sequence LLFGSSVLVNFLLISVMLFGT. At 486–811 the chain is on the cytoplasmic side; the sequence is YCSITSRKKI…DPSSYISSLA (326 aa). The Protein kinase domain occupies 521–795; that stretch reads GGFQEVLGTG…KVTQMLDGAV (275 aa). ATP is bound by residues 527–535 and K551; that span reads LGTGASGVV. The active-site Proton acceptor is the D645.

Belongs to the protein kinase superfamily. Ser/Thr protein kinase family.

The protein localises to the membrane. It carries out the reaction L-seryl-[protein] + ATP = O-phospho-L-seryl-[protein] + ADP + H(+). The enzyme catalyses L-threonyl-[protein] + ATP = O-phospho-L-threonyl-[protein] + ADP + H(+). Its function is as follows. Involved in resistance against the herbivorous insect brown planthopper (N.lugens, BPH). Member of the BPH3 (BPH resistance locus 3) cluster which contains LECRK1, LECRK2 and LECRK3. This chain is G-type lectin S-receptor-like serine/threonine-protein kinase LECRK3, found in Oryza sativa subsp. indica (Rice).